The chain runs to 177 residues: Large ribosomal subunit protein uL6 (177 aa).

It belongs to the universal ribosomal protein uL6 family. Part of the 50S ribosomal subunit.

This protein binds to the 23S rRNA, and is important in its secondary structure. It is located near the subunit interface in the base of the L7/L12 stalk, and near the tRNA binding site of the peptidyltransferase center. In Bordetella pertussis (strain Tohama I / ATCC BAA-589 / NCTC 13251), this protein is Large ribosomal subunit protein uL6.